Consider the following 311-residue polypeptide: Putative pyruvate, phosphate dikinase regulatory protein (311 aa).

180–187 contributes to the ADP binding site; it reads GVSRSSKT.

Belongs to the pyruvate, phosphate/water dikinase regulatory protein family. PDRP subfamily.

The enzyme catalyses N(tele)-phospho-L-histidyl/L-threonyl-[pyruvate, phosphate dikinase] + ADP = N(tele)-phospho-L-histidyl/O-phospho-L-threonyl-[pyruvate, phosphate dikinase] + AMP + H(+). It carries out the reaction N(tele)-phospho-L-histidyl/O-phospho-L-threonyl-[pyruvate, phosphate dikinase] + phosphate + H(+) = N(tele)-phospho-L-histidyl/L-threonyl-[pyruvate, phosphate dikinase] + diphosphate. Functionally, bifunctional serine/threonine kinase and phosphorylase involved in the regulation of the pyruvate, phosphate dikinase (PPDK) by catalyzing its phosphorylation/dephosphorylation. This is Putative pyruvate, phosphate dikinase regulatory protein from Paramagnetospirillum magneticum (strain ATCC 700264 / AMB-1) (Magnetospirillum magneticum).